A 466-amino-acid polypeptide reads, in one-letter code: UDP-N-acetylmuramoylalanine--D-glutamate ligase (466 aa).

An ATP-binding site is contributed by 122-128 (GTNGKTT).

Belongs to the MurCDEF family.

The protein resides in the cytoplasm. The enzyme catalyses UDP-N-acetyl-alpha-D-muramoyl-L-alanine + D-glutamate + ATP = UDP-N-acetyl-alpha-D-muramoyl-L-alanyl-D-glutamate + ADP + phosphate + H(+). It participates in cell wall biogenesis; peptidoglycan biosynthesis. Its function is as follows. Cell wall formation. Catalyzes the addition of glutamate to the nucleotide precursor UDP-N-acetylmuramoyl-L-alanine (UMA). The polypeptide is UDP-N-acetylmuramoylalanine--D-glutamate ligase (Aromatoleum aromaticum (strain DSM 19018 / LMG 30748 / EbN1) (Azoarcus sp. (strain EbN1))).